Reading from the N-terminus, the 434-residue chain is Glutamate-1-semialdehyde 2,1-aminomutase (434 aa).

Residue Lys267 is modified to N6-(pyridoxal phosphate)lysine.

Belongs to the class-III pyridoxal-phosphate-dependent aminotransferase family. HemL subfamily. As to quaternary structure, homodimer. Pyridoxal 5'-phosphate is required as a cofactor.

The protein localises to the cytoplasm. The enzyme catalyses (S)-4-amino-5-oxopentanoate = 5-aminolevulinate. It functions in the pathway porphyrin-containing compound metabolism; protoporphyrin-IX biosynthesis; 5-aminolevulinate from L-glutamyl-tRNA(Glu): step 2/2. The protein operates within porphyrin-containing compound metabolism; chlorophyll biosynthesis. This Roseiflexus castenholzii (strain DSM 13941 / HLO8) protein is Glutamate-1-semialdehyde 2,1-aminomutase.